The chain runs to 504 residues: Anaerobic nitric oxide reductase transcription regulator NorR (504 aa).

A 4-aspartylphosphate modification is found at Asp57. The region spanning Met187–Val416 is the Sigma-54 factor interaction domain. Residues Gly215–Glu222 and Ala278–Glu287 contribute to the ATP site. Positions Trp479–Lys498 form a DNA-binding region, H-T-H motif.

It functions in the pathway nitrogen metabolism; nitric oxide reduction. Required for the expression of anaerobic nitric oxide (NO) reductase, acts as a transcriptional activator for at least the norVW operon. Activation also requires sigma-54. This chain is Anaerobic nitric oxide reductase transcription regulator NorR, found in Escherichia coli (strain K12 / MC4100 / BW2952).